We begin with the raw amino-acid sequence, 127 residues long: Ribosome-binding factor A (127 aa).

The protein belongs to the RbfA family. Monomer. Binds 30S ribosomal subunits, but not 50S ribosomal subunits or 70S ribosomes.

It localises to the cytoplasm. Functionally, one of several proteins that assist in the late maturation steps of the functional core of the 30S ribosomal subunit. Associates with free 30S ribosomal subunits (but not with 30S subunits that are part of 70S ribosomes or polysomes). Required for efficient processing of 16S rRNA. May interact with the 5'-terminal helix region of 16S rRNA. This Glaesserella parasuis serovar 5 (strain SH0165) (Haemophilus parasuis) protein is Ribosome-binding factor A.